Here is a 307-residue protein sequence, read N- to C-terminus: Elongation factor Ts (307 aa).

An involved in Mg(2+) ion dislocation from EF-Tu region spans residues 79-82 (TDFV).

This sequence belongs to the EF-Ts family.

It localises to the cytoplasm. Functionally, associates with the EF-Tu.GDP complex and induces the exchange of GDP to GTP. It remains bound to the aminoacyl-tRNA.EF-Tu.GTP complex up to the GTP hydrolysis stage on the ribosome. The sequence is that of Elongation factor Ts from Sinorhizobium medicae (strain WSM419) (Ensifer medicae).